The chain runs to 529 residues: NAD(P)H-quinone oxidoreductase chain 4 1 (529 aa).

A run of 13 helical transmembrane segments spans residues 4-24 (FPWL…IPFI), 36-56 (WYAL…FTNF), 91-111 (LILL…PVTL), 115-135 (LFYF…AVQD), 137-157 (LVFF…LAIW), 169-189 (FILY…AMAF), 209-229 (GFQL…LPIV), 243-263 (TAPV…YALI), 277-297 (FAPV…LTSY), 314-334 (IGFV…GAVL), 335-355 (QMVS…ATYD), 387-407 (LALP…GFAT), and 417-437 (VIVV…LLSM).

This sequence belongs to the complex I subunit 4 family.

Its subcellular location is the cellular thylakoid membrane. It carries out the reaction a plastoquinone + NADH + (n+1) H(+)(in) = a plastoquinol + NAD(+) + n H(+)(out). It catalyses the reaction a plastoquinone + NADPH + (n+1) H(+)(in) = a plastoquinol + NADP(+) + n H(+)(out). Its function is as follows. NDH-1 shuttles electrons from NAD(P)H, via FMN and iron-sulfur (Fe-S) centers, to quinones in the respiratory chain. The immediate electron acceptor for the enzyme in this species is believed to be plastoquinone. Couples the redox reaction to proton translocation (for every two electrons transferred, four hydrogen ions are translocated across the cytoplasmic membrane), and thus conserves the redox energy in a proton gradient. This is NAD(P)H-quinone oxidoreductase chain 4 1 from Thermosynechococcus vestitus (strain NIES-2133 / IAM M-273 / BP-1).